A 536-amino-acid chain; its full sequence is MAVASKKIPAPDEVRIQTALLSVSDKAGIVELARALHGKGVRLVSTGGTHKALAAAGLPVSDVSELTGFPEVMDGRVKTLHPGVHGGLLAIRDDADHKAAMDEHGITGIDLAVINLYPFEEVRAQGGDYPTTVENIDIGGPAMIRASAKNHAYVTIVTDPADYSALLEEIADGTTRYAFRQKMAAKAYARTAAYDAAISNWFAEALDLAMPRHRVIGGVLKEEMRYGENPHQKAGFYVTGEQRPGVATAALLQGKQLSYNNINDTDAAFELVAEFLPEKAPACAIIKHANPCGVATAPSLTEAYRRALACDSTSAFGGIIALNQELDAETAEEIVKLFTEVIIAPSVSDEAKAIIARKPNLRLLAAGGLPDARTPGLTAKTVAGGLLVQTRDNGMVEDLELKVVTKRAPTAQELEDMKFAFKVAKHVKSNAVVYAKDGQTAGIGAGQMSRVDSARIAAIKAEEAARAHGLAAPLTRGSAVASEAFLPFADGLLSAIAAGATAVIQPGGSMRDEEVIAAANEHNVAMVFTGMRHFRH.

The MGS-like domain occupies 8–158; the sequence is IPAPDEVRIQ…KNHAYVTIVT (151 aa).

This sequence belongs to the PurH family.

It catalyses the reaction (6R)-10-formyltetrahydrofolate + 5-amino-1-(5-phospho-beta-D-ribosyl)imidazole-4-carboxamide = 5-formamido-1-(5-phospho-D-ribosyl)imidazole-4-carboxamide + (6S)-5,6,7,8-tetrahydrofolate. The enzyme catalyses IMP + H2O = 5-formamido-1-(5-phospho-D-ribosyl)imidazole-4-carboxamide. It participates in purine metabolism; IMP biosynthesis via de novo pathway; 5-formamido-1-(5-phospho-D-ribosyl)imidazole-4-carboxamide from 5-amino-1-(5-phospho-D-ribosyl)imidazole-4-carboxamide (10-formyl THF route): step 1/1. It functions in the pathway purine metabolism; IMP biosynthesis via de novo pathway; IMP from 5-formamido-1-(5-phospho-D-ribosyl)imidazole-4-carboxamide: step 1/1. The protein is Bifunctional purine biosynthesis protein PurH of Sinorhizobium fredii (strain NBRC 101917 / NGR234).